The primary structure comprises 347 residues: tRNA(Ile)-lysidine synthase (347 aa).

27-32 (SGGADS) lines the ATP pocket. The interval 243-263 (AAPASPSHVEGEASAPHDAAH) is disordered.

The protein belongs to the tRNA(Ile)-lysidine synthase family.

It localises to the cytoplasm. It catalyses the reaction cytidine(34) in tRNA(Ile2) + L-lysine + ATP = lysidine(34) in tRNA(Ile2) + AMP + diphosphate + H(+). Ligates lysine onto the cytidine present at position 34 of the AUA codon-specific tRNA(Ile) that contains the anticodon CAU, in an ATP-dependent manner. Cytidine is converted to lysidine, thus changing the amino acid specificity of the tRNA from methionine to isoleucine. In Nitratidesulfovibrio vulgaris (strain ATCC 29579 / DSM 644 / CCUG 34227 / NCIMB 8303 / VKM B-1760 / Hildenborough) (Desulfovibrio vulgaris), this protein is tRNA(Ile)-lysidine synthase.